The following is a 486-amino-acid chain: Glutamyl-tRNA(Gln) amidotransferase subunit A (486 aa).

Active-site charge relay system residues include Lys77 and Ser152. Ser176 functions as the Acyl-ester intermediate in the catalytic mechanism.

This sequence belongs to the amidase family. GatA subfamily. In terms of assembly, heterotrimer of A, B and C subunits.

It catalyses the reaction L-glutamyl-tRNA(Gln) + L-glutamine + ATP + H2O = L-glutaminyl-tRNA(Gln) + L-glutamate + ADP + phosphate + H(+). Functionally, allows the formation of correctly charged Gln-tRNA(Gln) through the transamidation of misacylated Glu-tRNA(Gln) in organisms which lack glutaminyl-tRNA synthetase. The reaction takes place in the presence of glutamine and ATP through an activated gamma-phospho-Glu-tRNA(Gln). This Lactococcus lactis subsp. cremoris (strain SK11) protein is Glutamyl-tRNA(Gln) amidotransferase subunit A.